Reading from the N-terminus, the 572-residue chain is NADH-ubiquinone oxidoreductase chain 5 (572 aa).

17 helical membrane passes run 6-26 (FFFL…YLMI), 44-64 (VVMT…VMYI), 86-106 (IMIV…PNLI), 107-127 (SILL…IYYQ), 147-167 (VAIL…YIYY), 179-201 (IITL…SSWL), 208-230 (PTPV…LLIR), 234-254 (MLMV…TMFM), 268-288 (IIAL…SMGY), 291-311 (LAFF…MCAG), 337-357 (SICF…AGFY), 372-394 (NFFI…FRLF), 422-442 (IGLL…IFPV), 454-474 (FLTL…SDFV), 479-499 (LFSL…FMPF), 524-544 (WGEL…INYI), and 552-572 (FKVY…LFFL).

It belongs to the complex I subunit 5 family.

It localises to the mitochondrion inner membrane. The catalysed reaction is a ubiquinone + NADH + 5 H(+)(in) = a ubiquinol + NAD(+) + 4 H(+)(out). Functionally, core subunit of the mitochondrial membrane respiratory chain NADH dehydrogenase (Complex I) that is believed to belong to the minimal assembly required for catalysis. Complex I functions in the transfer of electrons from NADH to the respiratory chain. The immediate electron acceptor for the enzyme is believed to be ubiquinone. This chain is NADH-ubiquinone oxidoreductase chain 5 (ND5), found in Locusta migratoria (Migratory locust).